Consider the following 232-residue polypeptide: Probable dihydroorotate dehydrogenase B (NAD(+)), electron transfer subunit (232 aa).

Positions 1–86 (MYYTRITQIE…RGAFGSAFTP (86 aa)) constitute an FAD-binding FR-type domain. 4 residues coordinate [2Fe-2S] cluster: Cys-202, Cys-207, Cys-210, and Cys-219.

It belongs to the PyrK family. As to quaternary structure, heterotetramer of 2 PyrK and 2 PyrD type B subunits. Requires [2Fe-2S] cluster as cofactor. FAD is required as a cofactor.

It participates in pyrimidine metabolism; UMP biosynthesis via de novo pathway; orotate from (S)-dihydroorotate (NAD(+) route): step 1/1. In terms of biological role, responsible for channeling the electrons from the oxidation of dihydroorotate from the FMN redox center in the PyrD type B subunit to the ultimate electron acceptor NAD(+). This Archaeoglobus fulgidus (strain ATCC 49558 / DSM 4304 / JCM 9628 / NBRC 100126 / VC-16) protein is Probable dihydroorotate dehydrogenase B (NAD(+)), electron transfer subunit.